The primary structure comprises 305 residues: uncharacterized protein (305 aa).

10 helical membrane passes run 4 to 24 (LNIY…FNLA), 38 to 58 (AWRF…TEGI), 67 to 87 (AVSY…LFFV), 95 to 115 (VNGA…ARII), 125 to 145 (VLGI…GSIE), 152 to 172 (ISGG…YGVL), 183 to 203 (LSTT…VSLF), 215 to 235 (IGVW…GYLW), 250 to 270 (LFFN…GTPI), and 272 to 292 (VFQV…SGVI). EamA domains follow at residues 15 to 140 (IFTG…LVIT) and 164 to 290 (VCWA…TASG).

The protein belongs to the EamA transporter family.

It localises to the cell membrane. This is an uncharacterized protein from Bacillus subtilis (strain 168).